We begin with the raw amino-acid sequence, 89 residues long: Small ribosomal subunit protein uS15 (89 aa).

Belongs to the universal ribosomal protein uS15 family. In terms of assembly, part of the 30S ribosomal subunit. Forms a bridge to the 50S subunit in the 70S ribosome, contacting the 23S rRNA.

In terms of biological role, one of the primary rRNA binding proteins, it binds directly to 16S rRNA where it helps nucleate assembly of the platform of the 30S subunit by binding and bridging several RNA helices of the 16S rRNA. Forms an intersubunit bridge (bridge B4) with the 23S rRNA of the 50S subunit in the ribosome. The sequence is that of Small ribosomal subunit protein uS15 from Kineococcus radiotolerans (strain ATCC BAA-149 / DSM 14245 / SRS30216).